A 79-amino-acid chain; its full sequence is Small proline-rich protein 4 (79 aa).

Low complexity predominate over residues 1–26 (MSSQQQQRQQQQCPPQRAQQQQVKQP). The tract at residues 1–79 (MSSQQQQRQQ…AQQASKSKQK (79 aa)) is disordered. Over residues 66-79 (KCPSAQQASKSKQK) the composition is skewed to polar residues.

It belongs to the cornifin (SPRR) family. In terms of processing, cross-linked to membrane proteins by transglutaminase.

It localises to the cytoplasm. The protein resides in the cell cortex. Functionally, cross-linked envelope protein of keratinocytes. Involved in UV-induced cornification. In Homo sapiens (Human), this protein is Small proline-rich protein 4 (SPRR4).